Here is a 503-residue protein sequence, read N- to C-terminus: NAD(P)H-quinone oxidoreductase chain 4, chloroplastic (503 aa).

The next 13 membrane-spanning stretches (helical) occupy residues Phe-4 to Leu-24, Ile-37 to Leu-57, Ile-87 to Val-107, Leu-134 to Met-154, Phe-167 to Leu-187, Ala-208 to Ile-228, His-242 to Val-262, Ala-272 to Ala-292, Ile-305 to Asp-325, Gly-330 to Gly-350, Leu-386 to Thr-406, Ile-416 to Met-436, and Leu-462 to Val-482.

The protein belongs to the complex I subunit 4 family.

It localises to the plastid. The protein localises to the chloroplast thylakoid membrane. The catalysed reaction is a plastoquinone + NADH + (n+1) H(+)(in) = a plastoquinol + NAD(+) + n H(+)(out). It carries out the reaction a plastoquinone + NADPH + (n+1) H(+)(in) = a plastoquinol + NADP(+) + n H(+)(out). The chain is NAD(P)H-quinone oxidoreductase chain 4, chloroplastic from Drimys granadensis.